The chain runs to 512 residues: 2-isopropylmalate synthase (512 aa).

The 264-residue stretch at 5–268 folds into the Pyruvate carboxyltransferase domain; sequence LIIFDTTLRD…DVDIETQHIL (264 aa). Mn(2+)-binding residues include Asp14, His202, His204, and Asn239. The segment at 394-512 is regulatory domain; it reads SFVSLSQHSE…SKADRVAAQG (119 aa).

Belongs to the alpha-IPM synthase/homocitrate synthase family. LeuA type 1 subfamily. Homodimer. The cofactor is Mn(2+).

Its subcellular location is the cytoplasm. It catalyses the reaction 3-methyl-2-oxobutanoate + acetyl-CoA + H2O = (2S)-2-isopropylmalate + CoA + H(+). The protein operates within amino-acid biosynthesis; L-leucine biosynthesis; L-leucine from 3-methyl-2-oxobutanoate: step 1/4. Its function is as follows. Catalyzes the condensation of the acetyl group of acetyl-CoA with 3-methyl-2-oxobutanoate (2-ketoisovalerate) to form 3-carboxy-3-hydroxy-4-methylpentanoate (2-isopropylmalate). This Albidiferax ferrireducens (strain ATCC BAA-621 / DSM 15236 / T118) (Rhodoferax ferrireducens) protein is 2-isopropylmalate synthase.